The chain runs to 943 residues: Translation initiation factor IF-2 (943 aa).

The segment at 35 to 359 (MSSIDQDQEA…MPQRKERPLP (325 aa)) is disordered. Positions 57 to 76 (KAPSSQAAKTPAKAAKTSSA) are enriched in low complexity. Basic and acidic residues-rich tracts occupy residues 92–103 (SNDHADAAEHSQ) and 110–124 (AKQENKPARSNKTSD). The span at 130-141 (SKSTILRPRSTQ) shows a compositional bias: polar residues. Low complexity predominate over residues 142–190 (TAHTNTNHNRGGNTASANNTANGRNSNRSNNNNNNRSANNANRSGNNNR). 3 stretches are compositionally biased toward basic and acidic residues: residues 191 to 205 (SNERNRNDRNRRFDN), 239 to 250 (ASERQQPKRQEA), and 259 to 271 (KRSEQPRTERPRT). 2 stretches are compositionally biased toward low complexity: residues 289 to 299 (PAAAAPKPASA) and 315 to 330 (NFGRSNSYGNRNGFNR). The segment covering 331-342 (NNRRNKKNKRRQ) has biased composition (basic residues). Over residues 346-358 (PKKEMPQRKERPL) the composition is skewed to basic and acidic residues. Positions 444–613 (PRPPVVTIMG…LLEADVLELK (170 aa)) constitute a tr-type G domain. Positions 453-460 (GHVDHGKT) are G1. 453–460 (GHVDHGKT) provides a ligand contact to GTP. Positions 478-482 (GITQH) are G2. The interval 499-502 (DTPG) is G3. GTP-binding positions include 499-503 (DTPGH) and 553-556 (NKID). Residues 553–556 (NKID) form a G4 region. The tract at residues 589–591 (SAK) is G5.

The protein belongs to the TRAFAC class translation factor GTPase superfamily. Classic translation factor GTPase family. IF-2 subfamily.

The protein localises to the cytoplasm. Its function is as follows. One of the essential components for the initiation of protein synthesis. Protects formylmethionyl-tRNA from spontaneous hydrolysis and promotes its binding to the 30S ribosomal subunits. Also involved in the hydrolysis of GTP during the formation of the 70S ribosomal complex. This chain is Translation initiation factor IF-2, found in Lacticaseibacillus paracasei (strain ATCC 334 / BCRC 17002 / CCUG 31169 / CIP 107868 / KCTC 3260 / NRRL B-441) (Lactobacillus paracasei).